The primary structure comprises 476 residues: FAD-dependent monooxygenase prhF (476 aa).

The FAD site is built by Glu41, Gly55, and Arg114. Residue Tyr222 is part of the active site. Residues Asp314 and Ala327 each contribute to the FAD site. An N-linked (GlcNAc...) asparagine glycan is attached at Asn343. A helical membrane pass occupies residues 447–467; the sequence is LGSTPIQMLTLLLPCLFYFMY. A glycan (N-linked (GlcNAc...) asparagine) is linked at Asn471.

This sequence belongs to the paxM FAD-dependent monooxygenase family. FAD is required as a cofactor.

The protein resides in the membrane. Its pathway is secondary metabolite biosynthesis; terpenoid biosynthesis. In terms of biological role, FAD-dependent monooxygenase; part of the gene cluster that mediates the biosynthesis of paraherquonin, a meroterpenoid with a unique, highly congested hexacyclic molecular architecture. The first step of the pathway is the synthesis of 3,5-dimethylorsellinic acid (DMOA) by the polyketide synthase prhL. Synthesis of DMOA is followed by farnesylation by the prenyltransferase prhE, methylesterification by the methyl-transferase prhM, epoxidation of the prenyl chain by the flavin-dependent monooxygenase prhF, and cyclization of the farnesyl moiety by the terpene cyclase prhH, to yield the tetracyclic intermediate, protoaustinoid A. The short chain dehydrogenase prhI then oxidizes the C-3 alcohol group of the terpene cyclase product to transform protoaustinoid A into protoaustinoid B. The FAD-binding monooxygenase prhJ catalyzes the oxidation of protoaustinoid B into preaustinoid A which is further oxidized into preaustinoid A1 by FAD-binding monooxygenase phrK. Finally, prhA leads to berkeleydione via the berkeleyone B intermediate. PrhA is a multifunctional dioxygenase that first desaturates at C5-C6 to form berkeleyone B, followed by rearrangement of the A/B-ring to form the cycloheptadiene moiety in berkeleydione. Berkeleydione serves as the key intermediate for the biosynthesis of paraherquonin as well as many other meroterpenoids. The cytochrome P450 monooxygenases prhB, prhD, and prhN, as well as the isomerase prhC, are probably involved in the late stage of paraherquonin biosynthesis, after the production of berkeleydione. Especially prhC might be a multifunctional enzyme that catalyzes the D-ring expansion via intramolecular methoxy rearrangement, as well as the hydrolysis of the expanded D-ring. This Penicillium brasilianum protein is FAD-dependent monooxygenase prhF.